A 908-amino-acid chain; its full sequence is Metabotropic glutamate receptor 8 (908 aa).

An N-terminal signal peptide occupies residues M1 to S33. At Q34–W583 the chain is on the extracellular side. Cysteines 64 and 106 form a disulfide. Residue N95 is glycosylated (N-linked (GlcNAc...) asparagine). L-glutamate contacts are provided by residues S156, A177 to T179, and Y227. Cystine bridges form between C246–C534, C369–C384, C424–C431, C516–C535, C520–C538, C541–C553, and C556–C569. An N-linked (GlcNAc...) asparagine glycan is attached at N298. D309 is a binding site for L-glutamate. Position 401 (K401) interacts with L-glutamate. 2 N-linked (GlcNAc...) asparagine glycosylation sites follow: N452 and N480. A glycan (N-linked (GlcNAc...) asparagine) is linked at N565. A helical membrane pass occupies residues A584–Y608. The Cytoplasmic segment spans residues N609–E620. A helical membrane pass occupies residues L621–A641. The Extracellular portion of the chain corresponds to A642–I647. Residues C648 to T668 traverse the membrane as a helical segment. The Cytoplasmic portion of the chain corresponds to K669 to Q695. Residues L696–V716 traverse the membrane as a helical segment. At D717–D746 the chain is on the extracellular side. The chain crosses the membrane as a helical span at residues L747–I768. The Cytoplasmic portion of the chain corresponds to K769–K781. The chain crosses the membrane as a helical span at residues P782–G803. Residues T804–L818 are Extracellular-facing. A helical membrane pass occupies residues T819–F843. Topologically, residues H844–I908 are cytoplasmic. A Glycyl lysine isopeptide (Lys-Gly) (interchain with G-Cter in SUMO1) cross-link involves residue K882.

This sequence belongs to the G-protein coupled receptor 3 family. As to quaternary structure, interacts with PICK1. Prominent expression in olfactory bulb, pontine gray, lateral reticular nucleus of the thalamus, and piriform cortex. Less abundant expression incerebral cortex, hippocampus, cerebellum, and mammillary body.

Its subcellular location is the cell membrane. G-protein coupled receptor for glutamate. Ligand binding causes a conformation change that triggers signaling via guanine nucleotide-binding proteins (G proteins) and modulates the activity of down-stream effectors. Signaling inhibits adenylate cyclase activity. The chain is Metabotropic glutamate receptor 8 (Grm8) from Rattus norvegicus (Rat).